We begin with the raw amino-acid sequence, 50 residues long: uncharacterized protein (50 aa).

A helical membrane pass occupies residues Leu-10–Ile-29.

It is found in the plastid. Its subcellular location is the chloroplast membrane. This is an uncharacterized protein from Marchantia polymorpha (Common liverwort).